Consider the following 710-residue polypeptide: Polyribonucleotide nucleotidyltransferase (710 aa).

Mg(2+)-binding residues include Asp-486 and Asp-492. Residues 553 to 612 (PRIHTIKISVDKIKDVIGKGGSVIRALTEETGTTIEIEDDGTVKIAATDGDKAKFAIRRI) enclose the KH domain. The 69-residue stretch at 622 to 690 (GRIYNGKVTR…RQGRVRLSIK (69 aa)) folds into the S1 motif domain. A disordered region spans residues 690–710 (KEAGEQAQPEAEAVPAAPEAE). Residues 694-710 (EQAQPEAEAVPAAPEAE) show a composition bias toward low complexity.

It belongs to the polyribonucleotide nucleotidyltransferase family. As to quaternary structure, component of the RNA degradosome, which is a multiprotein complex involved in RNA processing and mRNA degradation. The cofactor is Mg(2+).

The protein resides in the cytoplasm. It carries out the reaction RNA(n+1) + phosphate = RNA(n) + a ribonucleoside 5'-diphosphate. Functionally, involved in mRNA degradation. Catalyzes the phosphorolysis of single-stranded polyribonucleotides processively in the 3'- to 5'-direction. The chain is Polyribonucleotide nucleotidyltransferase from Erwinia tasmaniensis (strain DSM 17950 / CFBP 7177 / CIP 109463 / NCPPB 4357 / Et1/99).